A 130-amino-acid chain; its full sequence is Large ribosomal subunit protein uL14 (130 aa).

This sequence belongs to the universal ribosomal protein uL14 family. In terms of assembly, part of the 50S ribosomal subunit. Forms a cluster with proteins L3 and L19. In the 70S ribosome, L14 and L19 interact and together make contacts with the 16S rRNA in bridges B5 and B8.

Its function is as follows. Binds to 23S rRNA. Forms part of two intersubunit bridges in the 70S ribosome. The polypeptide is Large ribosomal subunit protein uL14 (Helicobacter pylori (strain P12)).